The primary structure comprises 269 residues: Cytochrome c oxidase subunit 3 (269 aa).

Residues 1–22 (MTNLIRSNFQDHPFHLVSPSPW) lie on the Mitochondrial matrix side of the membrane. Residues 23–41 (PLNTSVCLLNLTTTGALSM) form a helical membrane-spanning segment. Residues 42–48 (HNFNNIH) lie on the Mitochondrial intermembrane side of the membrane. The chain crosses the membrane as a helical span at residues 49–73 (YLYYIALIGLVSAMFLWFRDIISEG). Over 74 to 80 (TFLGDHT) the chain is Mitochondrial matrix. Residues 81-114 (LAVQRGLNLGIILFIVSEALFFLAIFWAFFHSAL) traverse the membrane as a helical segment. Residues 115–137 (TPTVELGAQWPPIGIEPVNPFEL) are Mitochondrial intermembrane-facing. A helical transmembrane segment spans residues 138-161 (PLLNTVILLSSGATITYAHHALIK). Residues 162–164 (GER) are Mitochondrial matrix-facing. The helical transmembrane segment at 165–188 (EGALYGSIATILLAIIFTGFQGVE) threads the bilayer. At 189–201 (YSVSSFTISDGAF) the chain is on the mitochondrial intermembrane side. Residues 202-230 (GTCFFFSTGFHGIHVIIGTIFLAVALWRI) traverse the membrane as a helical segment. Over 231 to 248 (FAYHLTDNHHVGFEGGIL) the chain is Mitochondrial matrix. A helical membrane pass occupies residues 249-265 (YWHFVDVVWLFLYISVY). Over 266-269 (YWGS) the chain is Mitochondrial intermembrane.

This sequence belongs to the cytochrome c oxidase subunit 3 family. In terms of assembly, component of the cytochrome c oxidase (complex IV, CIV), a multisubunit enzyme composed of 11 subunits. The complex is composed of a catalytic core of 3 subunits Cox1, Cox2 and Cox3, encoded in the mitochondrial DNA, and 8 supernumerary subunits Cox4, Cox5a/Cox5, Cox6, Cox7, Cox8, Cox7a/Cox9, Cox6b/Cox12 and Cox6a/Cox13, which are encoded in the nuclear genome. The complex exists as a monomer or a dimer and forms respiratory supercomplexes (SCs) in the inner mitochondrial membrane with NADH-ubiquinone oxidoreductase (complex I, CI) and ubiquinol-cytochrome c oxidoreductase (cytochrome b-c1 complex, complex III, CIII), resulting in various different assemblies (supercomplexes I(1)IV(1), I(1)III(3)IV(2), III(2)IV(1) and III(2)IV(2) as well as larger supercomplexes of compositions like I(1)III(2)IV(5-6)).

The protein localises to the mitochondrion inner membrane. The catalysed reaction is 4 Fe(II)-[cytochrome c] + O2 + 8 H(+)(in) = 4 Fe(III)-[cytochrome c] + 2 H2O + 4 H(+)(out). In terms of biological role, component of the cytochrome c oxidase, the last enzyme in the mitochondrial electron transport chain which drives oxidative phosphorylation. The respiratory chain contains 3 multisubunit complexes succinate dehydrogenase (complex II, CII), ubiquinol-cytochrome c oxidoreductase (cytochrome b-c1 complex, complex III, CIII) and cytochrome c oxidase (complex IV, CIV), that cooperate to transfer electrons derived from NADH and succinate to molecular oxygen, creating an electrochemical gradient over the inner membrane that drives transmembrane transport and the ATP synthase. Cytochrome c oxidase is the component of the respiratory chain that catalyzes the reduction of oxygen to water. Electrons originating from reduced cytochrome c in the intermembrane space (IMS) are transferred via the dinuclear copper A center (CU(A)) of Cox2 and heme A of Cox1 to the active site in Cox1, a binuclear center (BNC) formed by heme A3 and copper B (CU(B)). The BNC reduces molecular oxygen to 2 water molecules using 4 electrons from cytochrome c in the IMS and 4 protons from the mitochondrial matrix. The chain is Cytochrome c oxidase subunit 3 (cox-3) from Neurospora crassa (strain ATCC 24698 / 74-OR23-1A / CBS 708.71 / DSM 1257 / FGSC 987).